The following is a 191-amino-acid chain: Pyridoxal 5'-phosphate synthase subunit PdxT (191 aa).

52–54 (GES) contributes to the L-glutamine binding site. The Nucleophile role is filled by Cys81. L-glutamine-binding positions include Arg108 and 136–137 (IR). Catalysis depends on charge relay system residues His172 and Glu174.

The protein belongs to the glutaminase PdxT/SNO family. As to quaternary structure, in the presence of PdxS, forms a dodecamer of heterodimers. Only shows activity in the heterodimer.

It carries out the reaction aldehydo-D-ribose 5-phosphate + D-glyceraldehyde 3-phosphate + L-glutamine = pyridoxal 5'-phosphate + L-glutamate + phosphate + 3 H2O + H(+). The catalysed reaction is L-glutamine + H2O = L-glutamate + NH4(+). Its pathway is cofactor biosynthesis; pyridoxal 5'-phosphate biosynthesis. In terms of biological role, catalyzes the hydrolysis of glutamine to glutamate and ammonia as part of the biosynthesis of pyridoxal 5'-phosphate. The resulting ammonia molecule is channeled to the active site of PdxS. This chain is Pyridoxal 5'-phosphate synthase subunit PdxT, found in Actinobacillus pleuropneumoniae serotype 5b (strain L20).